The chain runs to 526 residues: MYYRSIKSEIIQTICTYHEEPSLIFNKICRTKTETLLLESATVHGKKNIESMLIIDTAIKISCFKNIVEIEAISNNGLFLLNTIDLKILKKKSTKIKKKKSNVLEIHFPIFNYFTDEDKKLFLTSVFDALRIIKKSIKNPEKSKMGVFFGGILSYDLISSFEPIPRVFNSKYNHPDFCFYLSENLLIFDHKKKKCKLQTNIFTDNEEEKLNILKRIKIIYNQIKEINSKKKNNRINTFNDFKTKNKKWVDCKNDSKVYKNKVKKMKQMILNGEVFQIVISRKFFLPCPYPLESYIFLKKNNPSPYMFFMQDRHFVLFGASPESSLKFSSITRKIEIHPIAGTRPRAFSSIKKIDINEDNKMELAMRINSKELAEHCMLVDLARNDLSRICLPGSRVVSDLMKVVKYSHVMHLVSKVEGVLRNDLDIFHAYQCCMNMGTLTGAPKIRAMQIIAEEGEIRECYGGAIGYFTGKGDLDTCIVIRSAYVRNGIACVQAGAGIVLDSIADEENEECKNKAMAVINAINKTL.

Residues Ser-40 and 304–306 contribute to the L-tryptophan site; that span reads PYM. Residue 341-342 coordinates chorismate; it reads GT. Position 374 (Glu-374) interacts with Mg(2+). Chorismate-binding positions include Tyr-461, Arg-481, 495-497, and Gly-497; that span reads GAG. Glu-510 lines the Mg(2+) pocket.

This sequence belongs to the anthranilate synthase component I family. As to quaternary structure, heterotetramer consisting of two non-identical subunits: a beta subunit (TrpG) and a large alpha subunit (TrpE). It depends on Mg(2+) as a cofactor.

It carries out the reaction chorismate + L-glutamine = anthranilate + pyruvate + L-glutamate + H(+). Its pathway is amino-acid biosynthesis; L-tryptophan biosynthesis; L-tryptophan from chorismate: step 1/5. With respect to regulation, feedback inhibited by tryptophan. In terms of biological role, part of a heterotetrameric complex that catalyzes the two-step biosynthesis of anthranilate, an intermediate in the biosynthesis of L-tryptophan. In the first step, the glutamine-binding beta subunit (TrpG) of anthranilate synthase (AS) provides the glutamine amidotransferase activity which generates ammonia as a substrate that, along with chorismate, is used in the second step, catalyzed by the large alpha subunit of AS (TrpE) to produce anthranilate. In the absence of TrpG, TrpE can synthesize anthranilate directly from chorismate and high concentrations of ammonia. This chain is Anthranilate synthase component 1 (trpE), found in Buchnera aphidicola subsp. Tetraneura caerulescens.